We begin with the raw amino-acid sequence, 198 residues long: MPIGVPKVLFRNPGDPISSWVDVYNRLYRERLLFLGQGISTDLSNQLIGLMMYLSMEDENKELYLFVNSPGGWVIPGIAIYDTMQFVRPDIHTICIGLAASMGSFILAGGQLTKRIAFPHARVMIHEPYSAFYMAQVGEFVMEAVELMKLRETLTRVYAERTGKPFWVVHEDMERDIFMSATEAQAYGIVDFVAVQGK.

Serine 101 acts as the Nucleophile in catalysis. Histidine 126 is an active-site residue.

Belongs to the peptidase S14 family. In terms of assembly, component of the chloroplastic Clp protease core complex.

The protein localises to the plastid. Its subcellular location is the chloroplast stroma. It catalyses the reaction Hydrolysis of proteins to small peptides in the presence of ATP and magnesium. alpha-casein is the usual test substrate. In the absence of ATP, only oligopeptides shorter than five residues are hydrolyzed (such as succinyl-Leu-Tyr-|-NHMec, and Leu-Tyr-Leu-|-Tyr-Trp, in which cleavage of the -Tyr-|-Leu- and -Tyr-|-Trp bonds also occurs).. Cleaves peptides in various proteins in a process that requires ATP hydrolysis. Has a chymotrypsin-like activity. Plays a major role in the degradation of misfolded proteins. This Solanum bulbocastanum (Wild potato) protein is ATP-dependent Clp protease proteolytic subunit.